A 271-amino-acid chain; its full sequence is Putative pyruvate, phosphate dikinase regulatory protein (271 aa).

153-160 (GVSRTSKT) is a binding site for ADP.

This sequence belongs to the pyruvate, phosphate/water dikinase regulatory protein family. PDRP subfamily.

The enzyme catalyses N(tele)-phospho-L-histidyl/L-threonyl-[pyruvate, phosphate dikinase] + ADP = N(tele)-phospho-L-histidyl/O-phospho-L-threonyl-[pyruvate, phosphate dikinase] + AMP + H(+). The catalysed reaction is N(tele)-phospho-L-histidyl/O-phospho-L-threonyl-[pyruvate, phosphate dikinase] + phosphate + H(+) = N(tele)-phospho-L-histidyl/L-threonyl-[pyruvate, phosphate dikinase] + diphosphate. In terms of biological role, bifunctional serine/threonine kinase and phosphorylase involved in the regulation of the pyruvate, phosphate dikinase (PPDK) by catalyzing its phosphorylation/dephosphorylation. The polypeptide is Putative pyruvate, phosphate dikinase regulatory protein (Shouchella clausii (strain KSM-K16) (Alkalihalobacillus clausii)).